The primary structure comprises 661 residues: UvrABC system protein B (661 aa).

One can recognise a Helicase ATP-binding domain in the interval 25–182 (AGLSSKKRSQ…NDLINLQYER (158 aa)). 38-45 (GITGSGKT) contributes to the ATP binding site. The Beta-hairpin motif lies at 91–114 (YYDYYQPEAYIARTDTFIEKDSSI). One can recognise a Helicase C-terminal domain in the interval 430-592 (QVEDLISEIQ…IIPKTINRAI (163 aa)). Residues 621-656 (KTHIDKLKKEMLKAASNLEFEQAVKLRDQLKTLEEA) form the UVR domain.

Belongs to the UvrB family. As to quaternary structure, forms a heterotetramer with UvrA during the search for lesions. Interacts with UvrC in an incision complex.

It localises to the cytoplasm. Functionally, the UvrABC repair system catalyzes the recognition and processing of DNA lesions. A damage recognition complex composed of 2 UvrA and 2 UvrB subunits scans DNA for abnormalities. Upon binding of the UvrA(2)B(2) complex to a putative damaged site, the DNA wraps around one UvrB monomer. DNA wrap is dependent on ATP binding by UvrB and probably causes local melting of the DNA helix, facilitating insertion of UvrB beta-hairpin between the DNA strands. Then UvrB probes one DNA strand for the presence of a lesion. If a lesion is found the UvrA subunits dissociate and the UvrB-DNA preincision complex is formed. This complex is subsequently bound by UvrC and the second UvrB is released. If no lesion is found, the DNA wraps around the other UvrB subunit that will check the other stand for damage. In Rickettsia rickettsii (strain Sheila Smith), this protein is UvrABC system protein B.